Reading from the N-terminus, the 452-residue chain is Tripartite motif-containing protein 49C (452 aa).

The segment at 15–56 adopts an RING-type zinc-finger fold; sequence CPLCMNYFIDPVTIDCGHSFCRPCFYLNWQDIPFLVQCSECT. The B box-type zinc-finger motif lies at 88-129; it reads SEEQMCGTHRETKKIFCEVDRSLLCLLCSSSQEHRYHRHRPI. Zn(2+)-binding residues include C93, H96, C115, and H121. A B30.2/SPRY domain is found at 269-452; the sequence is ELSAGPITGL…LRPIFCCIHF (184 aa).

This Homo sapiens (Human) protein is Tripartite motif-containing protein 49C (TRIM49C).